The chain runs to 98 residues: DNA-binding protein Fis (98 aa).

The segment at residues 74-93 is a DNA-binding region (H-T-H motif); the sequence is QTRAAVMMGINRGTLRKKLK.

It belongs to the transcriptional regulatory Fis family. Homodimer.

Functionally, activates ribosomal RNA transcription. Plays a direct role in upstream activation of rRNA promoters. The chain is DNA-binding protein Fis from Aeromonas hydrophila subsp. hydrophila (strain ATCC 7966 / DSM 30187 / BCRC 13018 / CCUG 14551 / JCM 1027 / KCTC 2358 / NCIMB 9240 / NCTC 8049).